The following is a 495-amino-acid chain: Cobyric acid synthase (495 aa).

Residues Ser250–Trp444 enclose the GATase cobBQ-type domain. Cys331 (nucleophile) is an active-site residue. The active site involves His436.

It belongs to the CobB/CobQ family. CobQ subfamily.

The protein operates within cofactor biosynthesis; adenosylcobalamin biosynthesis. Catalyzes amidations at positions B, D, E, and G on adenosylcobyrinic A,C-diamide. NH(2) groups are provided by glutamine, and one molecule of ATP is hydrogenolyzed for each amidation. The protein is Cobyric acid synthase of Rippkaea orientalis (strain PCC 8801 / RF-1) (Cyanothece sp. (strain PCC 8801)).